The primary structure comprises 231 residues: Glutathione-S-transferase (231 aa).

The 84-residue stretch at 15-98 (LFAVKGTATS…YIADAYDKDG (84 aa)) folds into the GST N-terminal domain.

This sequence belongs to the GST superfamily.

It carries out the reaction RX + glutathione = an S-substituted glutathione + a halide anion + H(+). In terms of biological role, conjugation of reduced glutathione to a wide number of exogenous and endogenous hydrophobic electrophiles. The polypeptide is Glutathione-S-transferase (Alternaria alternata (Alternaria rot fungus)).